Here is a 728-residue protein sequence, read N- to C-terminus: Protein psiK (728 aa).

Positions Met-1 to Ala-20 are cleaved as a signal peptide. Over Val-21 to Ser-666 the chain is Extracellular. 3 N-linked (GlcNAc...) asparagine glycosylation sites follow: Asn-61, Asn-74, and Asn-104. One can recognise a PA14 domain in the interval Met-118–Asn-266. Residues Asn-272, Asn-326, Asn-335, Asn-438, Asn-543, and Asn-638 are each glycosylated (N-linked (GlcNAc...) asparagine). Residues Val-667 to Ala-687 traverse the membrane as a helical segment. The Cytoplasmic portion of the chain corresponds to Gly-688–Asn-728.

This sequence belongs to the prespore-cell-inducing factor family.

It localises to the membrane. This Dictyostelium discoideum (Social amoeba) protein is Protein psiK (psiK).